The primary structure comprises 339 residues: Cathepsin B (339 aa).

The signal sequence occupies residues 1 to 17; the sequence is MWWSLILLSCLLALTSA. The propeptide at 18 to 79 is activation peptide; sequence HDKPSFHPLS…GRVAFGEDID (62 aa). 6 disulfides stabilise this stretch: C93–C122, C105–C150, C141–C207, C142–C146, C179–C211, and C187–C198. The active site involves C108. N192 is a glycosylation site (N-linked (GlcNAc...) asparagine). Residue K220 is modified to N6-acetyllysine. Active-site residues include H278 and N298. The propeptide occupies 334 to 339; sequence QYWGRF.

The protein belongs to the peptidase C1 family. Dimer of a heavy chain and a light chain cross-linked by a disulfide bond. Interacts with SRPX2. Directly interacts with SHKBP1. As to expression, expressed in thyroid epithelial cells.

The protein localises to the lysosome. Its subcellular location is the melanosome. It localises to the secreted. The protein resides in the extracellular space. It is found in the apical cell membrane. It carries out the reaction Hydrolysis of proteins with broad specificity for peptide bonds. Preferentially cleaves -Arg-Arg-|-Xaa bonds in small molecule substrates (thus differing from cathepsin L). In addition to being an endopeptidase, shows peptidyl-dipeptidase activity, liberating C-terminal dipeptides.. Its function is as follows. Thiol protease which is believed to participate in intracellular degradation and turnover of proteins. Cleaves matrix extracellular phosphoglycoprotein MEPE. Involved in the solubilization of cross-linked TG/thyroglobulin in the thyroid follicle lumen. Has also been implicated in tumor invasion and metastasis. In Mus musculus (Mouse), this protein is Cathepsin B (Ctsb).